We begin with the raw amino-acid sequence, 488 residues long: MEKWWFNSMLSNEELEHRCGLSKSMDSLGCPIGNTSGSEDPIINDTDKNIHSWNDSGSYSCSNVDHFLGVRDIWSFISDETFLVRDSNGNSYSVYFDIENHIFEIDNDSSFLSELESSFSSYLNNGSKSDNRYYDCDMYDTKYSWNNHINSCIDSYLRSEISIDSYISSGSDNCSDSYIYSYICSGESISGSDSGSSNIRTDGNGSDIRGRSNDFDINQKYRHLWVQCENCYGLNYKKFFKSKMNICEQCGYHLKMSSSDRIELSIDPGTWDPMDEDMVSIDPIEFHSEEEPYRDRIDSYQRKTGLTEAVQTGIGQLNGIPIAIGVMDFEFMGGSMGSVVGEKITRLIEYATNRSLPVIMVCASGGARMQEGSLSLMQMAKISSALYDYQSNKKLFYVSILTSPTTGGVTASFGMLGDIIIAEPNAYIAFAGKRVIEQTLNKTVPDGSQAAEYSFHKGLFDPIVPRNLLKGVLSELFQLHGFFPLTQN.

The interval 189–211 (ISGSDSGSSNIRTDGNGSDIRGR) is disordered. Residues 224–488 (LWVQCENCYG…LHGFFPLTQN (265 aa)) form the CoA carboxyltransferase N-terminal domain. 4 residues coordinate Zn(2+): Cys228, Cys231, Cys247, and Cys250. The C4-type zinc-finger motif lies at 228 to 250 (CENCYGLNYKKFFKSKMNICEQC).

The protein belongs to the AccD/PCCB family. As to quaternary structure, acetyl-CoA carboxylase is a heterohexamer composed of biotin carboxyl carrier protein, biotin carboxylase and 2 subunits each of ACCase subunit alpha and ACCase plastid-coded subunit beta (accD). The cofactor is Zn(2+).

The protein localises to the plastid. Its subcellular location is the chloroplast stroma. It carries out the reaction N(6)-carboxybiotinyl-L-lysyl-[protein] + acetyl-CoA = N(6)-biotinyl-L-lysyl-[protein] + malonyl-CoA. It participates in lipid metabolism; malonyl-CoA biosynthesis; malonyl-CoA from acetyl-CoA: step 1/1. In terms of biological role, component of the acetyl coenzyme A carboxylase (ACC) complex. Biotin carboxylase (BC) catalyzes the carboxylation of biotin on its carrier protein (BCCP) and then the CO(2) group is transferred by the transcarboxylase to acetyl-CoA to form malonyl-CoA. The chain is Acetyl-coenzyme A carboxylase carboxyl transferase subunit beta, chloroplastic from Liriodendron tulipifera (Tuliptree).